The primary structure comprises 187 residues: Elongation factor P (187 aa).

Belongs to the elongation factor P family.

The protein resides in the cytoplasm. It participates in protein biosynthesis; polypeptide chain elongation. Functionally, involved in peptide bond synthesis. Stimulates efficient translation and peptide-bond synthesis on native or reconstituted 70S ribosomes in vitro. Probably functions indirectly by altering the affinity of the ribosome for aminoacyl-tRNA, thus increasing their reactivity as acceptors for peptidyl transferase. This chain is Elongation factor P, found in Mycoplasmopsis pulmonis (strain UAB CTIP) (Mycoplasma pulmonis).